A 471-amino-acid chain; its full sequence is Adenosylhomocysteinase (471 aa).

Substrate-binding residues include T60, D135, and E196. NAD(+) is bound at residue 197–199; the sequence is TTT. Substrate-binding residues include K226 and D230. NAD(+) contacts are provided by residues N231, 260 to 265, E283, N318, 339 to 341, and N387; these read GYGDVG and IGH.

The protein belongs to the adenosylhomocysteinase family. It depends on NAD(+) as a cofactor.

It is found in the cytoplasm. The enzyme catalyses S-adenosyl-L-homocysteine + H2O = L-homocysteine + adenosine. It participates in amino-acid biosynthesis; L-homocysteine biosynthesis; L-homocysteine from S-adenosyl-L-homocysteine: step 1/1. In terms of biological role, may play a key role in the regulation of the intracellular concentration of adenosylhomocysteine. The protein is Adenosylhomocysteinase of Chlorobaculum parvum (strain DSM 263 / NCIMB 8327) (Chlorobium vibrioforme subsp. thiosulfatophilum).